The following is a 208-amino-acid chain: Large ribosomal subunit protein uL3 (208 aa).

The interval 123–147 (RHGQSRGPMAHGSRYHRRPGSMGPV) is disordered.

It belongs to the universal ribosomal protein uL3 family. Part of the 50S ribosomal subunit. Forms a cluster with proteins L14 and L19.

Functionally, one of the primary rRNA binding proteins, it binds directly near the 3'-end of the 23S rRNA, where it nucleates assembly of the 50S subunit. This is Large ribosomal subunit protein uL3 from Streptococcus gordonii (strain Challis / ATCC 35105 / BCRC 15272 / CH1 / DL1 / V288).